The primary structure comprises 743 residues: Threonine synthase-like 1 (743 aa).

Lys281 is modified (N6-acetyllysine). Lys351 carries the post-translational modification N6-(pyridoxal phosphate)lysine.

The protein belongs to the threonine synthase family. The cofactor is pyridoxal 5'-phosphate.

The sequence is that of Threonine synthase-like 1 (THNSL1) from Macaca fascicularis (Crab-eating macaque).